A 310-amino-acid polypeptide reads, in one-letter code: tRNA uridine(34) hydroxylase (310 aa).

Positions 124-218 (SDPEVLLIDT…YFEEVPQEES (95 aa)) constitute a Rhodanese domain. The Cysteine persulfide intermediate role is filled by cysteine 178.

The protein belongs to the TrhO family.

It carries out the reaction uridine(34) in tRNA + AH2 + O2 = 5-hydroxyuridine(34) in tRNA + A + H2O. Functionally, catalyzes oxygen-dependent 5-hydroxyuridine (ho5U) modification at position 34 in tRNAs. This chain is tRNA uridine(34) hydroxylase, found in Pseudomonas putida (strain GB-1).